The primary structure comprises 211 residues: Thiamine-phosphate synthase (211 aa).

Residues 37-41 (QLRIK) and asparagine 69 each bind 4-amino-2-methyl-5-(diphosphooxymethyl)pyrimidine. Mg(2+) contacts are provided by aspartate 70 and aspartate 89. 4-amino-2-methyl-5-(diphosphooxymethyl)pyrimidine is bound at residue serine 108. 134–136 (TQT) is a 2-[(2R,5Z)-2-carboxy-4-methylthiazol-5(2H)-ylidene]ethyl phosphate binding site. Lysine 137 contacts 4-amino-2-methyl-5-(diphosphooxymethyl)pyrimidine. Residues glycine 166 and 186 to 187 (VS) each bind 2-[(2R,5Z)-2-carboxy-4-methylthiazol-5(2H)-ylidene]ethyl phosphate.

This sequence belongs to the thiamine-phosphate synthase family. The cofactor is Mg(2+).

The catalysed reaction is 2-[(2R,5Z)-2-carboxy-4-methylthiazol-5(2H)-ylidene]ethyl phosphate + 4-amino-2-methyl-5-(diphosphooxymethyl)pyrimidine + 2 H(+) = thiamine phosphate + CO2 + diphosphate. It catalyses the reaction 2-(2-carboxy-4-methylthiazol-5-yl)ethyl phosphate + 4-amino-2-methyl-5-(diphosphooxymethyl)pyrimidine + 2 H(+) = thiamine phosphate + CO2 + diphosphate. It carries out the reaction 4-methyl-5-(2-phosphooxyethyl)-thiazole + 4-amino-2-methyl-5-(diphosphooxymethyl)pyrimidine + H(+) = thiamine phosphate + diphosphate. It participates in cofactor biosynthesis; thiamine diphosphate biosynthesis; thiamine phosphate from 4-amino-2-methyl-5-diphosphomethylpyrimidine and 4-methyl-5-(2-phosphoethyl)-thiazole: step 1/1. Functionally, condenses 4-methyl-5-(beta-hydroxyethyl)thiazole monophosphate (THZ-P) and 2-methyl-4-amino-5-hydroxymethyl pyrimidine pyrophosphate (HMP-PP) to form thiamine monophosphate (TMP). This is Thiamine-phosphate synthase from Escherichia coli O1:K1 / APEC.